Here is a 467-residue protein sequence, read N- to C-terminus: Microtubule-associated tyrosine carboxypeptidase 1 (467 aa).

The segment covering 1–10 (MVLDSGTQVY) has biased composition (polar residues). Disordered stretches follow at residues 1–40 (MVLD…PLYP) and 77–111 (MRRS…TLRP). His-276 provides a ligand contact to Zn(2+). Glu-277 (nucleophile) is an active-site residue. Residues His-281 and Glu-312 each contribute to the Zn(2+) site.

The protein belongs to the peptidase MATCAP family. It depends on Zn(2+) as a cofactor.

The protein localises to the cytoplasm. It localises to the cytoskeleton. It catalyses the reaction C-terminal L-alpha-aminoacyl-L-glutamyl-L-glutamyl-L-tyrosyl-[tubulin] + H2O = C-terminal L-alpha-aminoacyl-L-glutamyl-L-glutamyl-[tubulin] + L-tyrosine. The enzyme catalyses C-terminal L-alpha-aminoacyl-L-glutamyl-L-glutamyl-L-phenylalanyl-[tubulin] + H2O = C-terminal L-alpha-aminoacyl-L-glutamyl-L-glutamyl-[tubulin] + L-phenylalanine. Functionally, tyrosine carboxypeptidase that removes the C-terminal tyrosine residue of alpha-tubulin, thereby regulating microtubule dynamics and function. Also able to remove the C-terminal phenylalanine residue of alpha-tubulin TUBA8. Recognizes adjacent tubulin dimers along the same protofilament. In Mus musculus (Mouse), this protein is Microtubule-associated tyrosine carboxypeptidase 1.